The following is a 255-amino-acid chain: 4-hydroxy-tetrahydrodipicolinate reductase (255 aa).

Residues 9–14 (GFKGKM), D35, 89–91 (GTT), and 115–118 (APNF) each bind NAD(+). H145 serves as the catalytic Proton donor/acceptor. Position 146 (H146) interacts with (S)-2,3,4,5-tetrahydrodipicolinate. The active-site Proton donor is the K149. 155-156 (GT) is a (S)-2,3,4,5-tetrahydrodipicolinate binding site.

Belongs to the DapB family.

The protein resides in the cytoplasm. It carries out the reaction (S)-2,3,4,5-tetrahydrodipicolinate + NAD(+) + H2O = (2S,4S)-4-hydroxy-2,3,4,5-tetrahydrodipicolinate + NADH + H(+). It catalyses the reaction (S)-2,3,4,5-tetrahydrodipicolinate + NADP(+) + H2O = (2S,4S)-4-hydroxy-2,3,4,5-tetrahydrodipicolinate + NADPH + H(+). Its pathway is amino-acid biosynthesis; L-lysine biosynthesis via DAP pathway; (S)-tetrahydrodipicolinate from L-aspartate: step 4/4. Catalyzes the conversion of 4-hydroxy-tetrahydrodipicolinate (HTPA) to tetrahydrodipicolinate. This Streptococcus pneumoniae serotype 4 (strain ATCC BAA-334 / TIGR4) protein is 4-hydroxy-tetrahydrodipicolinate reductase.